Reading from the N-terminus, the 290-residue chain is Appressorium protein ROW2 (290 aa).

Positions 1–19 are cleaved as a signal peptide; it reads MFTKSVFIALVAGVLGVTA. The segment at 266–290 is disordered; that stretch reads AIKTPSKRSVMATHVKRSPEWEEEP.

Its subcellular location is the secreted. The protein resides in the nucleus. Its function is as follows. Plays a role in the formation of the appressorium, a specialized infection structure with the purpose of penetrating the host surface, and is required for proper remodeling of the appressorium wall and vesicle secretion. In Mycosarcoma maydis (Corn smut fungus), this protein is Appressorium protein ROW2.